A 148-amino-acid polypeptide reads, in one-letter code: Small ribosomal subunit protein uS13 (148 aa).

It belongs to the universal ribosomal protein uS13 family. Part of the 30S ribosomal subunit. Forms a loose heterodimer with protein S19. Forms two bridges to the 50S subunit in the 70S ribosome.

Its function is as follows. Located at the top of the head of the 30S subunit, it contacts several helices of the 16S rRNA. In the 70S ribosome it contacts the 23S rRNA (bridge B1a) and protein L5 of the 50S subunit (bridge B1b), connecting the 2 subunits; these bridges are implicated in subunit movement. This chain is Small ribosomal subunit protein uS13, found in Pyrococcus abyssi (strain GE5 / Orsay).